The following is a 435-amino-acid chain: Methylenetetrahydrofolate--tRNA-(uracil-5-)-methyltransferase TrmFO (435 aa).

10–15 (GAGLAG) provides a ligand contact to FAD.

Belongs to the MnmG family. TrmFO subfamily. It depends on FAD as a cofactor.

Its subcellular location is the cytoplasm. It catalyses the reaction uridine(54) in tRNA + (6R)-5,10-methylene-5,6,7,8-tetrahydrofolate + NADH + H(+) = 5-methyluridine(54) in tRNA + (6S)-5,6,7,8-tetrahydrofolate + NAD(+). It carries out the reaction uridine(54) in tRNA + (6R)-5,10-methylene-5,6,7,8-tetrahydrofolate + NADPH + H(+) = 5-methyluridine(54) in tRNA + (6S)-5,6,7,8-tetrahydrofolate + NADP(+). In terms of biological role, catalyzes the folate-dependent formation of 5-methyl-uridine at position 54 (M-5-U54) in all tRNAs. This is Methylenetetrahydrofolate--tRNA-(uracil-5-)-methyltransferase TrmFO from Bacillus velezensis (strain DSM 23117 / BGSC 10A6 / LMG 26770 / FZB42) (Bacillus amyloliquefaciens subsp. plantarum).